A 36-amino-acid polypeptide reads, in one-letter code: Dolichyl-diphosphooligosaccharide--protein glycosyltransferase subunit 2 (36 aa).

It belongs to the SWP1 family. Component of the oligosaccharyltransferase (OST) complex.

Its subcellular location is the endoplasmic reticulum. The protein localises to the endoplasmic reticulum membrane. It participates in protein modification; protein glycosylation. In terms of biological role, subunit of the oligosaccharyl transferase (OST) complex that catalyzes the initial transfer of a defined glycan (Glc(3)Man(9)GlcNAc(2) in eukaryotes) from the lipid carrier dolichol-pyrophosphate to an asparagine residue within an Asn-X-Ser/Thr consensus motif in nascent polypeptide chains, the first step in protein N-glycosylation. N-glycosylation occurs cotranslationally and the complex associates with the Sec61 complex at the channel-forming translocon complex that mediates protein translocation across the endoplasmic reticulum (ER). All subunits are required for a maximal enzyme activity. This chain is Dolichyl-diphosphooligosaccharide--protein glycosyltransferase subunit 2, found in Gallus gallus (Chicken).